The primary structure comprises 1279 residues: Sterol regulatory element-binding protein cleavage-activating protein (1279 aa).

The Cytoplasmic portion of the chain corresponds to 1-18 (MTLTERLREKISQAFYNH). A helical membrane pass occupies residues 19–39 (GLLCASYPIPIILFTGLCILA). Over 40–279 (CCYPLLKLPL…SLVHVHFKEE (240 aa)) the chain is Lumenal. The segment at 46 to 284 (KLPLPGTGPV…HFKEEIGIAE (239 aa)) is loop-1. Positions 60 to 81 (PVKDYSPPPSASDHKPGEPSEQ) are disordered. N-linked (GlcNAc...) asparagine glycosylation occurs at Asn-263. A helical transmembrane segment spans residues 280–300 (IGIAELIPLVTTYIILFAYIY). In terms of domain architecture, SSD spans 284–442 (ELIPLVTTYI…MPFFTTVLSI (159 aa)). The Cytoplasmic segment spans residues 301–312 (FSTRKIDMVKSK). The helical transmembrane segment at 313 to 333 (WGLALAAVVTVLSSLLMSVGL) threads the bilayer. At 334 to 344 (CTLFGLTPTLN) the chain is on the lumenal side. Residues 345 to 365 (GGEIFPYLVVVIGLENVLVLT) form a helical membrane-spanning segment. Over 366–401 (KSVVSTPVDLEVKLRIAQGLSSESWSIMKNMATELG) the chain is Cytoplasmic. The chain crosses the membrane as a helical span at residues 402–422 (IILIGYFTLVPAIQEFCLFAV). Position 423 (Val-423) is a topological domain, lumenal. Residues 424-444 (GLVSDFFLQMPFFTTVLSIDI) form a helical membrane-spanning segment. The Cytoplasmic segment spans residues 445 to 518 (RRMELADLNK…FLARTRLAQR (74 aa)). Residues 447 to 452 (MELADL) carry the ER export signal motif. Glycyl lysine isopeptide (Lys-Gly) (interchain with G-Cter in ubiquitin) cross-links involve residues Lys-454 and Lys-466. The helical transmembrane segment at 519–539 (LIMAGTVVWIGILAYTDPAGL) threads the bilayer. The tract at residues 535 to 710 (DPAGLRTYLA…QAHRDVTLYK (176 aa)) is loop-7. The Lumenal portion of the chain corresponds to 540–707 (RTYLAAQVTE…GVAQAHRDVT (168 aa)). Residues 588-617 (LENQTLPGEPPEPGGQAEGVHDSPAPEVTW) form a disordered region. Asn-590 and Asn-641 each carry an N-linked (GlcNAc...) asparagine glycan. Residues 668–696 (EGRHPQDSRSAWSPPQPAQGGLWDAGPKG) form a disordered region. The chain crosses the membrane as a helical span at residues 708-728 (LYKVAALGLATGILLVLLLCL). Over 729 to 1279 (YRVLCPRNYG…YVPSVLEKLD (551 aa)) the chain is Cytoplasmic. An interaction with SREBF2 region spans residues 730–1279 (RVLCPRNYGQ…YVPSVLEKLD (550 aa)). Residues 770–810 (VLRGHLMDIECLASDGMLLVSCCLAGHVCVWDAQTGDCLTR) form a WD 1 repeat. Phosphoserine is present on residues Ser-821, Ser-837, Ser-843, and Ser-850. Disordered regions lie at residues 834–868 (ERLSDGGKASPEEPGDSPPLRHRPRGTPLPSLFGD), 883–903 (HPRLPELDHPEPRHRSGCRRT), and 925–959 (VPMHTPAPRPPSPGPTPPQTPEDEGSFPPEKGSPS). Residues 885 to 896 (RLPELDHPEPRH) show a composition bias toward basic and acidic residues. The segment covering 929 to 944 (TPAPRPPSPGPTPPQT) has biased composition (pro residues). Position 936 is a phosphoserine (Ser-936). WD repeat units follow at residues 952-1002 (PPEK…LRCS) and 1005-1042 (EVASGITALVFLDKRIVAARLNGSLDFFSLETHTALSP). The residue at position 1051 (Arg-1051) is an Omega-N-methylarginine. WD repeat units follow at residues 1077 to 1114 (AHQKPITALKAAAGRLVTGSQDHTLRVFRLEDSCCLFT), 1117 to 1155 (GHSGAITTVYIDQTMVLASGGQDGAICLWDVLTGSRVSH), 1158 to 1195 (AHRGDVTSLTCTTSCVISSGLDDLISIWDRSTGIKLYS), and 1197 to 1235 (QQDLGCGASLGVISDNLLVTGGQGCVSFWDLNYGDLLQT).

It belongs to the WD repeat SCAP family. Membrane region forms a homotetramer. Component of the SCAP-SREBP complex (composed of SCAP and SREBF1/SREBP1 or SREBF2/SREBP2); interacts with SREBF1/SREBP1 or SREBF2/SREBP2 through its C-terminal cytoplasmic domain. Forms a ternary complex with INSIG1 or INSIG2 through its transmembrane domains at high sterol concentrations. Interacts with PAQR3; the interaction anchors the SCAP-SREBP complex to the Golgi apparatus in low cholesterol conditions. Interacts with the SEC23-SEC24 complex in a SAR1-GTP-dependent manner through an ER export signal in its third cytoplasmic loop. Interacts with RNF139; the interaction inhibits the interaction of SCAP with SEC24B and hampering the ER to Golgi transport of the SCAP-SREBP complex. Interacts with SPRING1. Post-translationally, ubiquitinated at Lys-454 and Lys-466. RNF145 triggers ubiquitination of SCAP, likely inhibiting SCAP-SREBP complex transport to the Golgi apparatus and the subsequent processing/maturation of SREBF2/SREBP2. In terms of tissue distribution, widely expressed with higher levels in lung, kidney, gut, brain and adipose tissue. As to expression, expressed in liver and muscle. Isoform 3 expressed in testis. Expressed in testis.

The protein localises to the endoplasmic reticulum membrane. Its subcellular location is the golgi apparatus membrane. It localises to the cytoplasmic vesicle. It is found in the COPII-coated vesicle membrane. Escort protein required for cholesterol as well as lipid homeostasis. Regulates export of the SCAP-SREBP complex from the endoplasmic reticulum to the Golgi upon low cholesterol, thereby regulating the processing of sterol regulatory element-binding proteins (SREBPs) SREBF1/SREBP1 and SREBF2/SREBP2. At high sterol concentrations, formation of a ternary complex with INSIG (INSIG1 or INSIG2) leads to mask the ER export signal in SCAP, promoting retention of the complex in the endoplasmic reticulum. Low sterol concentrations trigger release of INSIG, a conformational change in the SSD domain of SCAP, unmasking of the ER export signal, promoting recruitment into COPII-coated vesicles and transport of the SCAP-SREBP to the Golgi: in the Golgi, SREBPs are then processed, releasing the transcription factor fragment of SREBPs from the membrane, its import into the nucleus and up-regulation of LDLR, INSIG1 and the mevalonate pathway. Binds cholesterol via its SSD domain. This chain is Sterol regulatory element-binding protein cleavage-activating protein, found in Sus scrofa (Pig).